We begin with the raw amino-acid sequence, 362 residues long: Class I histocompatibility antigen, Gogo-OKO alpha chain (362 aa).

The first 24 residues, 1–24, serve as a signal peptide directing secretion; sequence MAVVAPRTLLLLLSGTLALTRTWA. An alpha-1 region spans residues 25–114; that stretch reads GSHSMRYFYT…LRGYYNQSEG (90 aa). Residues 25 to 308 lie on the Extracellular side of the membrane; the sequence is GSHSMRYFYT…EPSSQPTIPI (284 aa). An N-linked (GlcNAc...) asparagine glycan is attached at N110. The tract at residues 115–206 is alpha-2; the sequence is GSHTIQRMYG…ENGKETLQRT (92 aa). 2 cysteine pairs are disulfide-bonded: C125–C188 and C227–C283. The alpha-3 stretch occupies residues 207 to 298; sequence DPPKTHMTHH…GLPKPLTLRW (92 aa). The 87-residue stretch at 209–295 folds into the Ig-like C1-type domain; sequence PKTHMTHHPV…QHEGLPKPLT (87 aa). The tract at residues 299–308 is connecting peptide; the sequence is EPSSQPTIPI. A helical transmembrane segment spans residues 309-332; that stretch reads VGIIAGLVLLGAVITGAVVAAMMW. At 333–362 the chain is on the cytoplasmic side; that stretch reads RKKSSGRKGGSYSQAASSDSAQGSDVSLTA. A disordered region spans residues 337-362; the sequence is SGRKGGSYSQAASSDSAQGSDVSLTA. Residues 342–362 show a composition bias toward low complexity; the sequence is GSYSQAASSDSAQGSDVSLTA.

Belongs to the MHC class I family. As to quaternary structure, heterodimer of an alpha chain and a beta chain (beta-2-microglobulin).

It is found in the membrane. In terms of biological role, involved in the presentation of foreign antigens to the immune system. This Gorilla gorilla gorilla (Western lowland gorilla) protein is Class I histocompatibility antigen, Gogo-OKO alpha chain.